Here is a 130-residue protein sequence, read N- to C-terminus: Protein ApaG (130 aa).

In terms of domain architecture, ApaG spans S3–P127.

The polypeptide is Protein ApaG (Paramagnetospirillum magneticum (strain ATCC 700264 / AMB-1) (Magnetospirillum magneticum)).